A 176-amino-acid polypeptide reads, in one-letter code: Lipoprotein signal peptidase (176 aa).

A run of 4 helical transmembrane segments spans residues 10–30 (LFQF…AIVL), 48–68 (VPVL…AFSF), 78–98 (YFFT…LLRM), and 102–122 (MVVL…NLID). Active-site residues include Asp131 and Asp149. A helical transmembrane segment spans residues 141-161 (HFPAFNIADSAITLGTILLLI).

This sequence belongs to the peptidase A8 family.

It is found in the cell inner membrane. The catalysed reaction is Release of signal peptides from bacterial membrane prolipoproteins. Hydrolyzes -Xaa-Yaa-Zaa-|-(S,diacylglyceryl)Cys-, in which Xaa is hydrophobic (preferably Leu), and Yaa (Ala or Ser) and Zaa (Gly or Ala) have small, neutral side chains.. Its pathway is protein modification; lipoprotein biosynthesis (signal peptide cleavage). This protein specifically catalyzes the removal of signal peptides from prolipoproteins. This is Lipoprotein signal peptidase from Acinetobacter baumannii (strain SDF).